The sequence spans 217 residues: MGRKIHPLGFRLGVSQKHYSYWFAQKKDYPKFLEEDRKIRNLVEKYIQKHVKSVSNYGGVGHIEIQRKTDLIQINIYTGFPDLLIEEQSLGISQMKQDLRNLLGLESQNLRVTLTGVIQPYGEPKILAEHVASQLKNRVPFRRTMKKTIEMAGRTNGGGIKIQIAGRLNGSEMARVEWAREGRVPLQTVEANISYCYHPAQTIYGVLGIKIWVFRDT.

The KH type-2 domain occupies 47–118; that stretch reads IQKHVKSVSN…NLRVTLTGVI (72 aa).

Belongs to the universal ribosomal protein uS3 family. As to quaternary structure, part of the 30S ribosomal subunit.

It localises to the plastid. Its subcellular location is the chloroplast. This is Small ribosomal subunit protein uS3c (rps3) from Adiantum capillus-veneris (Maidenhair fern).